The sequence spans 283 residues: GTP cyclohydrolase MptA (283 aa).

This sequence belongs to the GTP cyclohydrolase IV family. As to quaternary structure, homodimer. Fe(2+) serves as cofactor.

It carries out the reaction GTP + H2O = 7,8-dihydroneopterin 2',3'-cyclic phosphate + formate + diphosphate + H(+). It participates in cofactor biosynthesis; 5,6,7,8-tetrahydromethanopterin biosynthesis. Its function is as follows. Converts GTP to 7,8-dihydro-D-neopterin 2',3'-cyclic phosphate, the first intermediate in the biosynthesis of coenzyme methanopterin. This Aeropyrum pernix (strain ATCC 700893 / DSM 11879 / JCM 9820 / NBRC 100138 / K1) protein is GTP cyclohydrolase MptA.